The sequence spans 498 residues: Glycerol kinase (498 aa).

T12 is a binding site for ADP. The ATP site is built by T12, T13, and S14. T12 contributes to the sn-glycerol 3-phosphate binding site. An ADP-binding site is contributed by R16. Sn-glycerol 3-phosphate-binding residues include R82, E83, and Y134. Positions 82, 83, and 134 each coordinate glycerol. H230 is subject to Phosphohistidine; by HPr. A sn-glycerol 3-phosphate-binding site is contributed by D244. D244 and Q245 together coordinate glycerol. Residues T266 and G309 each coordinate ADP. The ATP site is built by T266, G309, Q313, and G410. G410 and N414 together coordinate ADP.

The protein belongs to the FGGY kinase family. In terms of assembly, homotetramer and homodimer (in equilibrium). In terms of processing, the phosphoenolpyruvate-dependent sugar phosphotransferase system (PTS), including enzyme I, and histidine-containing protein (HPr) are required for the phosphorylation, which leads to the activation of the enzyme.

The catalysed reaction is glycerol + ATP = sn-glycerol 3-phosphate + ADP + H(+). Its pathway is polyol metabolism; glycerol degradation via glycerol kinase pathway; sn-glycerol 3-phosphate from glycerol: step 1/1. With respect to regulation, activated by phosphorylation and inhibited by fructose 1,6-bisphosphate (FBP). Its function is as follows. Key enzyme in the regulation of glycerol uptake and metabolism. Catalyzes the phosphorylation of glycerol to yield sn-glycerol 3-phosphate. This Staphylococcus aureus (strain MW2) protein is Glycerol kinase.